The following is a 469-amino-acid chain: Protein HEAT STRESS TOLERANT DWD 1 (469 aa).

The segment covering 1-15 has biased composition (basic residues); that stretch reads MGRNVKTKAKRKNKK. Disordered stretches follow at residues 1 to 29 and 115 to 150; these read MGRN…SIPT and DVVP…KTPN. The span at 124-143 shows a compositional bias: acidic residues; it reads GEDEDEDDEDDSDSDDDDGD. 6 WD repeats span residues 157-197, 221-261, 267-307, 311-351, 358-398, and 425-464; these read AHHG…NALA, GHKD…WAVD, GHTA…SPAL, AHNA…GGDA, YHKH…DEEE, and QGQK…NTLP.

Belongs to the WD repeat RBAP46/RBAP48/MSI1 family. As to quaternary structure, probable component of CULLIN4 (CUL4) RING ligase (CRL4) complexes. Interacts with DDB1A and DDB1B. Associates with HSP90-1.

It functions in the pathway protein modification; protein ubiquitination. Functionally, probable substrate receptor of CRL4 E3 ligase complexes acting as negative regulators of thermotolerance by disturbing the action of HSP90-1 and by preventing the expression of heat-inducible genes (e.g. HSP14.7, HSP21, At2g03020 and WRKY28). This is Protein HEAT STRESS TOLERANT DWD 1 from Arabidopsis thaliana (Mouse-ear cress).